A 385-amino-acid polypeptide reads, in one-letter code: GDP-D-glucose phosphorylase 1 (385 aa).

The active-site Tele-GMP-histidine intermediate is the H218.

The protein belongs to the GDPGP1 family.

Its subcellular location is the cytoplasm. The catalysed reaction is GDP-alpha-D-glucose + phosphate = alpha-D-glucose 1-phosphate + GDP + H(+). Specific and highly efficient GDP-D-glucose phosphorylase regulating the levels of GDP-D-glucose in cells. The chain is GDP-D-glucose phosphorylase 1 (GDPGP1) from Bos taurus (Bovine).